Reading from the N-terminus, the 282-residue chain is Putative dolichyldiphosphatase (282 aa).

The next 2 helical transmembrane spans lie at 26-46 (LLCAWLALVPQALCVVYATLI) and 93-113 (MPSSHAQFVSFWAVALGLFLL). The disordered stretch occupies residues 121–153 (QQQQQQQKQKQRERKKQVTNVKTTTTNGSGNGS). The segment covering 138 to 148 (VTNVKTTTTNG) has biased composition (low complexity). 2 helical membrane-spanning segments follow: residues 173–193 (WSFAHRFVASLGALVLAGAVA) and 207–227 (VLVGCGAGTLCAVAWFVVTHV).

The protein belongs to the dolichyldiphosphatase family.

It is found in the endoplasmic reticulum membrane. The catalysed reaction is a di-trans,poly-cis-dolichyl diphosphate + H2O = a di-trans,poly-cis-dolichyl phosphate + phosphate + H(+). The protein operates within protein modification; protein glycosylation. In Neurospora crassa (strain ATCC 24698 / 74-OR23-1A / CBS 708.71 / DSM 1257 / FGSC 987), this protein is Putative dolichyldiphosphatase.